The following is a 1887-amino-acid chain: Fatty acid synthase subunit alpha (1887 aa).

Residue Lys-37 forms a Glycyl lysine isopeptide (Lys-Gly) (interchain with G-Cter in ubiquitin) linkage. Residue Ser-50 is modified to Phosphoserine. The tract at residues 96 to 120 (ELAAKEEPAKEEAPAPTPAASAPAP) is disordered. Positions 98 to 108 (AAKEEPAKEEA) are enriched in basic and acidic residues. The Carrier domain maps to 145 to 220 (VKASLLLHVL…ETFQDTFSGA (76 aa)). At Ser-180 the chain carries O-(pantetheine 4'-phosphoryl)serine. Ser-523 is modified (phosphoserine). The interval 675-874 (DKYVLITGAG…CGAIIGWTRG (200 aa)) is beta-ketoacyl reductase. Ser-958 carries the phosphoserine modification. A Ketosynthase family 3 (KS3) domain is found at 1123 to 1657 (QEVIVEEDLE…QKGGQAIVVH (535 aa)). Residue Cys-1305 is the For beta-ketoacyl synthase activity of the active site. The residue at position 1440 (Ser-1440) is a Phosphoserine. Catalysis depends on for beta-ketoacyl synthase activity residues His-1542 and His-1583. Residues Asp-1772, Val-1773, and Glu-1774 each coordinate Mg(2+). Acetyl-CoA is bound by residues 1772–1774 (DVE), Tyr-1798, Ser-1808, 1817–1827 (EAVFKSLGVKS), 1841–1844 (RVNK), and 1871–1873 (ISH). Mg(2+) is bound by residues Ser-1872 and His-1873.

It belongs to the thiolase-like superfamily. Fungal fatty acid synthetase subunit alpha family. In terms of assembly, [Alpha(6)beta(6)] hexamers of two multifunctional subunits (alpha and beta). Post-translationally, 4'-phosphopantetheine is transferred from CoA to a specific serine of the Acyl carrier domain by the C-terminal PPT domain. This modification is essential for activity because fatty acids are bound in thioester linkage to the sulfhydryl of the prosthetic group.

The enzyme catalyses acetyl-CoA + n malonyl-CoA + 2n NADPH + 4n H(+) = a long-chain-acyl-CoA + n CoA + n CO2 + 2n NADP(+).. The catalysed reaction is a fatty acyl-[ACP] + malonyl-[ACP] + H(+) = a 3-oxoacyl-[ACP] + holo-[ACP] + CO2. It carries out the reaction a (3R)-hydroxyacyl-[ACP] + NADP(+) = a 3-oxoacyl-[ACP] + NADPH + H(+). Inhibited by cerulenin by covalent binding to active site of the ketoacyl synthase (KS) region. Fatty acid synthetase catalyzes the formation of long-chain fatty acids from acetyl-CoA, malonyl-CoA and NADPH. The alpha subunit contains domains for: acyl carrier protein, 3-oxoacyl-[acyl-carrier-protein] reductase, and 3-oxoacyl-[acyl-carrier-protein] synthase. This subunit coordinates the binding of the six beta subunits to the enzyme complex. In Saccharomyces cerevisiae (strain ATCC 204508 / S288c) (Baker's yeast), this protein is Fatty acid synthase subunit alpha (FAS2).